A 247-amino-acid chain; its full sequence is Probable chemoreceptor glutamine deamidase CheD (247 aa).

The tract at residues 204–247 (KRPAAPQPARPRIELFGGRGTAPGAGSPSAGSPYAANLSRKQEA) is disordered. Low complexity predominate over residues 227–239 (GAGSPSAGSPYAA).

Belongs to the CheD family.

The enzyme catalyses L-glutaminyl-[protein] + H2O = L-glutamyl-[protein] + NH4(+). Probably deamidates glutamine residues to glutamate on methyl-accepting chemotaxis receptors (MCPs), playing an important role in chemotaxis. The sequence is that of Probable chemoreceptor glutamine deamidase CheD from Burkholderia orbicola (strain AU 1054).